Reading from the N-terminus, the 85-residue chain is Alpha-defensin 14 (85 aa).

Positions Ala1–Ala11 are cleaved as a signal peptide. A propeptide spanning residues Asp12 to Ser50 is cleaved from the precursor. The tract at residues Pro13–Glu48 is disordered. 3 cysteine pairs are disulfide-bonded: Cys56-Cys84, Cys58-Cys73, and Cys63-Cys83.

The protein belongs to the alpha-defensin family. Paneth cells of the small bowel.

It is found in the secreted. Functionally, probably contributes to the antimicrobial barrier function of the small bowel mucosa. This is Alpha-defensin 14 (Defa14) from Mus musculus (Mouse).